The sequence spans 252 residues: Probable transcriptional regulatory protein A1C_04175 (252 aa).

Belongs to the TACO1 family.

The protein localises to the cytoplasm. This Rickettsia akari (strain Hartford) protein is Probable transcriptional regulatory protein A1C_04175.